Here is a 79-residue protein sequence, read N- to C-terminus: Probable [Fe-S]-dependent transcriptional repressor (79 aa).

Positions 54, 59, 62, and 68 each coordinate iron-sulfur cluster.

The protein belongs to the FeoC family.

May function as a transcriptional regulator that controls feoABC expression. This Photorhabdus laumondii subsp. laumondii (strain DSM 15139 / CIP 105565 / TT01) (Photorhabdus luminescens subsp. laumondii) protein is Probable [Fe-S]-dependent transcriptional repressor.